A 482-amino-acid chain; its full sequence is Docking protein 1 (482 aa).

Met-1 is subject to N-acetylmethionine. Positions 4–119 (AVMEGPLFLQ…WVQTLCRTAF (116 aa)) constitute a PH domain. Ser-48 carries the phosphoserine modification. An IRS-type PTB domain is found at 151-259 (EGSQFWVTSQ…QQQKAQGKVG (109 aa)). Ser-269 and Ser-290 each carry phosphoserine. Residues 269–328 (SHDGETEGKTVPPPVPQDPLGSPPALYAEPLDSLRIPPGPSQDSVYSDPLGSTPAGAGEG) are disordered. A phosphotyrosine mark is found at Tyr-295, Tyr-336, Tyr-340, Tyr-361, and Tyr-376. Residues 353–373 (TDSKEDPIYDEPEGLAPAPPR) are disordered. Tyr-397 is modified (phosphotyrosine; by INSR). Residues 398–482 (ELPYNPATDD…RAGVKSEGST (85 aa)) form a disordered region. Tyr-408 bears the Phosphotyrosine mark. The segment covering 410 to 423 (VPPPRSPKPAPAPK) has biased composition (pro residues). The residue at position 415 (Ser-415) is a Phosphoserine. A compositionally biased stretch (polar residues) spans 432–459 (SGTTRGSGSKGFSSDTALYSQVQKSGTS). Tyr-450 carries the phosphotyrosine modification.

Belongs to the DOK family. Type A subfamily. As to quaternary structure, interacts with RasGAP, INPP5D/SHIP1 and ABL1. Interacts directly with phosphorylated ITGB3. Interacts with SRMS (via the SH2 and SH3 domains). Post-translationally, constitutively tyrosine-phosphorylated. Phosphorylated by TEC. Phosphorylated on tyrosine residues by the insulin receptor kinase. Results in the negative regulation of the insulin signaling pathway. Phosphorylated by LYN. Phosphorylated on tyrosine residues by SRMS. As to expression, expressed in lung, spleen, skeletal muscle and kidney.

The protein localises to the cytoplasm. It is found in the nucleus. Functionally, DOK proteins are enzymatically inert adaptor or scaffolding proteins. They provide a docking platform for the assembly of multimolecular signaling complexes. DOK1 appears to be a negative regulator of the insulin signaling pathway. Modulates integrin activation by competing with talin for the same binding site on ITGB3. This Mus musculus (Mouse) protein is Docking protein 1 (Dok1).